Consider the following 641-residue polypeptide: Tetracycline resistance protein TetS (641 aa).

A tr-type G domain is found at 1–242 (MKIINIGILA…VITSKLFSPT (242 aa)). Residues 10-17 (AHVDAGKT), 74-78 (DTPGH), and 128-131 (NKID) contribute to the GTP site.

The protein belongs to the TRAFAC class translation factor GTPase superfamily. Classic translation factor GTPase family. TetM/TetO subfamily.

Functionally, abolishes the inhibitory effect of tetracyclin on protein synthesis by a non-covalent modification of the ribosomes. This is Tetracycline resistance protein TetS (tetS) from Listeria monocytogenes.